Consider the following 1396-residue polypeptide: DNA-directed RNA polymerase subunit beta' (1396 aa).

4 residues coordinate Zn(2+): cysteine 73, cysteine 75, cysteine 88, and cysteine 91. Residues aspartate 467, aspartate 469, and aspartate 471 each contribute to the Mg(2+) site. Zn(2+) is bound by residues cysteine 817, cysteine 891, cysteine 898, and cysteine 901.

This sequence belongs to the RNA polymerase beta' chain family. In terms of assembly, the RNAP catalytic core consists of 2 alpha, 1 beta, 1 beta' and 1 omega subunit. When a sigma factor is associated with the core the holoenzyme is formed, which can initiate transcription. It depends on Mg(2+) as a cofactor. Zn(2+) serves as cofactor.

The catalysed reaction is RNA(n) + a ribonucleoside 5'-triphosphate = RNA(n+1) + diphosphate. In terms of biological role, DNA-dependent RNA polymerase catalyzes the transcription of DNA into RNA using the four ribonucleoside triphosphates as substrates. This Orientia tsutsugamushi (strain Boryong) (Rickettsia tsutsugamushi) protein is DNA-directed RNA polymerase subunit beta'.